The sequence spans 494 residues: Glutamate--tRNA ligase (494 aa).

The 'HIGH' region motif lies at P10–T20. Residues C107, C109, C134, and H136 each coordinate Zn(2+). The 'KMSKS' region motif lies at K251 to R255. K254 contributes to the ATP binding site.

This sequence belongs to the class-I aminoacyl-tRNA synthetase family. Glutamate--tRNA ligase type 1 subfamily. Monomer. Zn(2+) is required as a cofactor.

The protein resides in the cytoplasm. It carries out the reaction tRNA(Glu) + L-glutamate + ATP = L-glutamyl-tRNA(Glu) + AMP + diphosphate. In terms of biological role, catalyzes the attachment of glutamate to tRNA(Glu) in a two-step reaction: glutamate is first activated by ATP to form Glu-AMP and then transferred to the acceptor end of tRNA(Glu). This is Glutamate--tRNA ligase from Pseudomonas aeruginosa (strain UCBPP-PA14).